Here is a 423-residue protein sequence, read N- to C-terminus: Anhydromevalonate phosphate decarboxylase (423 aa).

Asparagine 134 and glutamate 197 together coordinate Mn(2+). Aspartate 245 serves as the catalytic Proton acceptor.

The protein belongs to the UbiD family. The cofactor is prenylated FMN. Requires Mn(2+) as cofactor.

It catalyses the reaction (2E)-3-methyl-5-phosphooxypent-2-enoate + H(+) = isopentenyl phosphate + CO2. Its pathway is isoprenoid biosynthesis; isopentenyl diphosphate biosynthesis via mevalonate pathway. In terms of biological role, catalyzes the conversion of trans-anhydromevalonate 5-phosphate (tAHMP) into isopentenyl phosphate. Involved in the archaeal mevalonate (MVA) pathway, which provides fundamental precursors for isoprenoid biosynthesis, such as isopentenyl diphosphate (IPP) and dimethylallyl diphosphate (DMAPP). This chain is Anhydromevalonate phosphate decarboxylase, found in Methanothermobacter thermautotrophicus (strain ATCC 29096 / DSM 1053 / JCM 10044 / NBRC 100330 / Delta H) (Methanobacterium thermoautotrophicum).